A 466-amino-acid chain; its full sequence is Uronate isomerase (466 aa).

This sequence belongs to the metallo-dependent hydrolases superfamily. Uronate isomerase family.

It carries out the reaction D-glucuronate = D-fructuronate. It catalyses the reaction aldehydo-D-galacturonate = keto-D-tagaturonate. The protein operates within carbohydrate metabolism; pentose and glucuronate interconversion. This Clostridium perfringens (strain 13 / Type A) protein is Uronate isomerase.